Here is a 414-residue protein sequence, read N- to C-terminus: Serine/threonine transporter SstT (414 aa).

The next 8 membrane-spanning stretches (helical) occupy residues 16 to 36, 46 to 66, 84 to 104, 143 to 163, 180 to 200, 219 to 239, 300 to 320, and 332 to 352; these read GSLVKQILVGLVLGILLAWIS, LGTLFVGALKAVAPVLVLMLV, ILFLYLLGTFSAALAAVVFSF, ALLNANYIGILVWAVGLGFAL, AVTFMVKLVIRFAPIGIFGLV, LVVLIGCMLLVALVVNPLLVF, MAGAAITITVLTLAAVHTLGV, and VVASLCACGASGVAGGSLLLI.

It belongs to the dicarboxylate/amino acid:cation symporter (DAACS) (TC 2.A.23) family.

It is found in the cell inner membrane. It catalyses the reaction L-serine(in) + Na(+)(in) = L-serine(out) + Na(+)(out). The enzyme catalyses L-threonine(in) + Na(+)(in) = L-threonine(out) + Na(+)(out). Functionally, involved in the import of serine and threonine into the cell, with the concomitant import of sodium (symport system). This Salmonella agona (strain SL483) protein is Serine/threonine transporter SstT.